The sequence spans 412 residues: Probable tRNA pseudouridine synthase D (412 aa).

The active-site Nucleophile is the Asp-97. One can recognise a TRUD domain in the interval Ala-167–Thr-370.

This sequence belongs to the pseudouridine synthase TruD family.

It carries out the reaction uridine(13) in tRNA = pseudouridine(13) in tRNA. Could be responsible for synthesis of pseudouridine from uracil-13 in transfer RNAs. This is Probable tRNA pseudouridine synthase D from Pyrobaculum islandicum (strain DSM 4184 / JCM 9189 / GEO3).